We begin with the raw amino-acid sequence, 340 residues long: NADPH dehydrogenase (340 aa).

23–26 (SPMC) contributes to the FMN binding site. Position 28 (Tyr28) interacts with substrate. The FMN site is built by Ala60 and Gln102. 164 to 167 (HAAH) contributes to the substrate binding site. FMN contacts are provided by residues Arg215 and 307–308 (GR).

Belongs to the NADH:flavin oxidoreductase/NADH oxidase family. NamA subfamily. Homotetramer. FMN serves as cofactor.

It catalyses the reaction A + NADPH + H(+) = AH2 + NADP(+). Functionally, catalyzes the reduction of the double bond of an array of alpha,beta-unsaturated aldehydes and ketones. It also reduces the nitro group of nitroester and nitroaromatic compounds. It could have a role in detoxification processes. The chain is NADPH dehydrogenase from Geobacillus thermodenitrificans (strain NG80-2).